A 327-amino-acid chain; its full sequence is Glycerol-3-phosphate acyltransferase (327 aa).

5 helical membrane-spanning segments follow: residues 3 to 23 (SLLW…LLFA), 52 to 72 (VGVL…AVAL), 78 to 98 (TVFH…SCFL), 112 to 132 (VFLP…LAVI), and 152 to 172 (MLLL…MVLV). Disordered stretches follow at residues 184 to 212 (SRGE…EAAA) and 233 to 327 (PSTE…SSGQ). A compositionally biased stretch (low complexity) spans 199-212 (AQGTDAGAAPEAAA). Residues 237–246 (AAPSQETSDA) show a composition bias toward polar residues. Residues 259-271 (EGDKRENEEHDNA) are compositionally biased toward basic and acidic residues.

The protein belongs to the PlsY family. Probably interacts with PlsX.

The protein resides in the cell inner membrane. The enzyme catalyses an acyl phosphate + sn-glycerol 3-phosphate = a 1-acyl-sn-glycero-3-phosphate + phosphate. It participates in lipid metabolism; phospholipid metabolism. Catalyzes the transfer of an acyl group from acyl-phosphate (acyl-PO(4)) to glycerol-3-phosphate (G3P) to form lysophosphatidic acid (LPA). This enzyme utilizes acyl-phosphate as fatty acyl donor, but not acyl-CoA or acyl-ACP. The polypeptide is Glycerol-3-phosphate acyltransferase (Nitratidesulfovibrio vulgaris (strain ATCC 29579 / DSM 644 / CCUG 34227 / NCIMB 8303 / VKM B-1760 / Hildenborough) (Desulfovibrio vulgaris)).